The primary structure comprises 464 residues: Glycine receptor subunit alpha-3 (464 aa).

An N-terminal signal peptide occupies residues 1–33 (MAHVRHFRTLVSGFYFWEAALLLSLVATKETDS). Residues 34-255 (ARSRSAPMSP…RFHLERQMGY (222 aa)) are Extracellular-facing. Asn71 carries an N-linked (GlcNAc...) asparagine glycan. A disulfide bridge links Cys171 with Cys185. Residues Glu225 and Asp227 each contribute to the Zn(2+) site. A disulfide bridge links Cys231 with Cys242. 235–240 (YNTGKF) is a strychnine binding site. His248 is a binding site for Zn(2+). A helical membrane pass occupies residues 256–277 (YLIQMYIPSLLIVILSWVSFWI). Topologically, residues 278 to 282 (NMDAA) are cytoplasmic. Residues 283 to 303 (PARVALGITTVLTMTTQSSGS) form a helical membrane-spanning segment. The Extracellular segment spans residues 304-314 (RASLPKVSYVK). Residues 315–335 (AIDIWMAVCLLFVFSALLEYA) traverse the membrane as a helical segment. Topologically, residues 336–430 (AVNFVSRQHK…FIDRAKKIDT (95 aa)) are cytoplasmic. Phosphoserine occurs at positions 370 and 379. A helical transmembrane segment spans residues 431-451 (ISRACFPLAFLIFNIFYWVIY). The Extracellular portion of the chain corresponds to 452 to 464 (KILRHEDIHQQQD).

Belongs to the ligand-gated ion channel (TC 1.A.9) family. Glycine receptor (TC 1.A.9.3) subfamily. GLRA3 sub-subfamily. Homopentamer (in vitro). Heteropentamer composed of GLRA3 and GLRB. Both homopentamers and heteropentamers form functional ion channels, but their characteristics are subtly different. Phosphorylated by PKA; this causes down-regulation of channel activity. Widely distributed throughout the central nervous system.

The protein localises to the postsynaptic cell membrane. Its subcellular location is the perikaryon. It localises to the cell projection. The protein resides in the dendrite. It is found in the synapse. The protein localises to the cell membrane. It carries out the reaction chloride(in) = chloride(out). Functionally, glycine receptors are ligand-gated chloride channels. Channel opening is triggered by extracellular glycine. Channel characteristics depend on the subunit composition; heteropentameric channels display faster channel closure. Plays an important role in the down-regulation of neuronal excitability. Contributes to the generation of inhibitory postsynaptic currents. Contributes to increased pain perception in response to increased prostaglandin E2 levels. Plays a role in cellular responses to ethanol. The sequence is that of Glycine receptor subunit alpha-3 (GLRA3) from Homo sapiens (Human).